The primary structure comprises 270 residues: Phosphatidate cytidylyltransferase (270 aa).

Helical transmembrane passes span 19-39 (LWLT…IGLA), 53-73 (TAFS…LLIL), 76-96 (GALL…VTQW), 101-121 (GWPA…SLLR), 126-146 (FGFT…IAAY), 183-203 (LVAS…ALLL), and 248-268 (ALLY…AIFF).

Belongs to the CDS family.

It localises to the cell inner membrane. It catalyses the reaction a 1,2-diacyl-sn-glycero-3-phosphate + CTP + H(+) = a CDP-1,2-diacyl-sn-glycerol + diphosphate. It participates in phospholipid metabolism; CDP-diacylglycerol biosynthesis; CDP-diacylglycerol from sn-glycerol 3-phosphate: step 3/3. The protein is Phosphatidate cytidylyltransferase (cdsA) of Brucella suis biovar 1 (strain 1330).